Reading from the N-terminus, the 247-residue chain is Segregation and condensation protein A (247 aa).

Belongs to the ScpA family. Component of a cohesin-like complex composed of ScpA, ScpB and the Smc homodimer, in which ScpA and ScpB bind to the head domain of Smc. The presence of the three proteins is required for the association of the complex with DNA.

The protein localises to the cytoplasm. Its function is as follows. Participates in chromosomal partition during cell division. May act via the formation of a condensin-like complex containing Smc and ScpB that pull DNA away from mid-cell into both cell halves. In Bacillus cereus (strain G9842), this protein is Segregation and condensation protein A.